Consider the following 142-residue polypeptide: Large ribosomal subunit protein uL11 (142 aa).

It belongs to the universal ribosomal protein uL11 family. In terms of assembly, part of the ribosomal stalk of the 50S ribosomal subunit. Interacts with L10 and the large rRNA to form the base of the stalk. L10 forms an elongated spine to which L12 dimers bind in a sequential fashion forming a multimeric L10(L12)X complex. One or more lysine residues are methylated.

Functionally, forms part of the ribosomal stalk which helps the ribosome interact with GTP-bound translation factors. This Leptospira borgpetersenii serovar Hardjo-bovis (strain JB197) protein is Large ribosomal subunit protein uL11.